The primary structure comprises 373 residues: MTFQFNFTIEDHLEDELTSLGDGALALHSSKESLVSERQKGTHRDKKCSTEQSDLLQDHLWEHKSERNEAPSQDPDSSFGAANSSSNLEPHEEKPCLKVAKEHAVPKDLKKVLENKVTETLPGLQHVNISIMKTTLLKENFPGENIISKSFSSHSDLISGVYEGGLKIWECTFDLLAYLTKAKVKFAGKKVLDLGCGSGLLGIMALKGGAKEIHFQDYNSVVIDEVTLPNVVANSTLEDEENDVNEPDVKRLRRSTVAQELCKCRFFSGEWSEFCKLVLSSEKLFEKYDLILTSETIYNPDYYVPLHQTFLRLLDKNGQVLLASKVHYFGVGGGTHLFQKFVEERNVFETRTLEIIDEGLKRCLIEMTFKYPT.

Residues 30 to 42 are compositionally biased toward basic and acidic residues; the sequence is SKESLVSERQKGT. 2 disordered regions span residues 30–52 and 64–94; these read SKES…STEQ and KSER…HEEK. Polar residues predominate over residues 70–88; sequence APSQDPDSSFGAANSSSNL. Phosphoserine is present on residues S72 and S77. Residue H154 is modified to Tele-methylhistidine. S-adenosyl-L-methionine is bound by residues 168-172, G195, and 216-218; these read IWECT and QDY. Positions 247–253 match the Nuclear localization signal motif; sequence PDVKRLR. Residues 269 to 271 and S294 each bind S-adenosyl-L-methionine; that span reads GEW.

It belongs to the methyltransferase superfamily. METTL18 family. In terms of assembly, interacts with GRWD1 and members of the heat shock protein 90 and 70 families; these proteins may possibly be methylation substrates for the enzyme. Monomethylated at His-154 through automethylation. Automethylation at His-154 positively regulates the methyltransferase activity toward RPL3. Probably methylated on other residues.

It localises to the cytoplasm. Its subcellular location is the cytosol. The protein localises to the nucleus. It is found in the nucleolus. It carries out the reaction L-histidyl-[protein] + S-adenosyl-L-methionine = N(tele)-methyl-L-histidyl-[protein] + S-adenosyl-L-homocysteine + H(+). In terms of biological role, protein-L-histidine N-tele-methyltransferase that specifically monomethylates RPL3, thereby regulating translation elongation. Histidine methylation of RPL3 regulates translation elongation by slowing ribosome traversal on tyrosine codons: slower elongation provides enough time for proper folding of synthesized proteins and prevents cellular aggregation of tyrosine-rich proteins. The sequence is that of Histidine protein methyltransferase 1 homolog (METTL18) from Bos taurus (Bovine).